We begin with the raw amino-acid sequence, 253 residues long: Ribosome-inactivating protein saporin-9 (253 aa).

Glu176 is a catalytic residue.

It carries out the reaction Endohydrolysis of the N-glycosidic bond at one specific adenosine on the 28S rRNA.. Ribosome-inactivating protein of type 1, inhibits protein synthesis in animal cells. The sequence is that of Ribosome-inactivating protein saporin-9 (SAP9) from Saponaria officinalis (Common soapwort).